The chain runs to 694 residues: Elongation factor G (694 aa).

The region spanning 10–285 (EKTRNIGIMA…AVLDYLPSPV (276 aa)) is the tr-type G domain. GTP-binding positions include 19–26 (AHIDAGKT), 83–87 (DTPGH), and 137–140 (NKMD).

It belongs to the TRAFAC class translation factor GTPase superfamily. Classic translation factor GTPase family. EF-G/EF-2 subfamily.

It is found in the cytoplasm. Functionally, catalyzes the GTP-dependent ribosomal translocation step during translation elongation. During this step, the ribosome changes from the pre-translocational (PRE) to the post-translocational (POST) state as the newly formed A-site-bound peptidyl-tRNA and P-site-bound deacylated tRNA move to the P and E sites, respectively. Catalyzes the coordinated movement of the two tRNA molecules, the mRNA and conformational changes in the ribosome. This is Elongation factor G from Limosilactobacillus fermentum (strain NBRC 3956 / LMG 18251) (Lactobacillus fermentum).